A 914-amino-acid chain; its full sequence is Alanine--tRNA ligase (914 aa).

Zn(2+) contacts are provided by His-613, His-617, Cys-717, and His-721.

Belongs to the class-II aminoacyl-tRNA synthetase family. Zn(2+) is required as a cofactor.

It localises to the cytoplasm. It catalyses the reaction tRNA(Ala) + L-alanine + ATP = L-alanyl-tRNA(Ala) + AMP + diphosphate. Its function is as follows. Catalyzes the attachment of alanine to tRNA(Ala) in a two-step reaction: alanine is first activated by ATP to form Ala-AMP and then transferred to the acceptor end of tRNA(Ala). Also edits incorrectly charged Ser-tRNA(Ala) and Gly-tRNA(Ala) via its editing domain. This is Alanine--tRNA ligase from Pyrococcus furiosus (strain ATCC 43587 / DSM 3638 / JCM 8422 / Vc1).